The sequence spans 372 residues: Pristinol synthase (372 aa).

The segment covering 1–12 has biased composition (basic and acidic residues); the sequence is MAHETTSGRRLP. A disordered region spans residues 1-23; sequence MAHETTSGRRLPDPTSPSDPTRR. Positions 100 and 104 each coordinate Mg(2+). A DDXXD motif motif is present at residues 100-104; it reads DDQFD. A substrate-binding site is contributed by Arg-197. Mg(2+) contacts are provided by Asn-243 and Ser-247. Substrate is bound at residue Lys-250. Glu-251 is a Mg(2+) binding site. Substrate is bound at residue 337–338; sequence RY. The interval 349-372 is disordered; that stretch reads GRRRPWDGLTTATGTASPRHPRRA.

It belongs to the terpene synthase family. It depends on Mg(2+) as a cofactor.

The enzyme catalyses (2E,6E)-farnesyl diphosphate + H2O = (+)-(2S,3R,9R)-pristinol + diphosphate. It functions in the pathway secondary metabolite biosynthesis; terpenoid biosynthesis. Its function is as follows. Catalyzes the conversion of (2E,6E)-farnesyl diphosphate (FPP) to yield a new 5-8 bicyclic (pristinane) sesquiterpenol (+)-(2S,3R,9R)-pristinol via a 1,11-cyclization, which requires the abstraction of the pyrophosphate from FPP to yield the humulyl cation. The only accepted substrate is farnesyl diphosphate (FPP). The protein is Pristinol synthase of Streptomyces pristinaespiralis (strain ATCC 25486 / DSM 40338 / CBS 914.69 / JCM 4507 / KCC S-0507 / NBRC 13074 / NRRL 2958 / 5647).